A 503-amino-acid polypeptide reads, in one-letter code: MALGRAFSVAVRGLDGEIVEIEADITSGLPGVHLVGLPDAALQESRDRVRAAVTNCGNSWPMARLTLALSPATLPKMGSVYDIALAAAVLSAQQKKPWERLENTLLLGELSLDGRVRPVRGVLPAVLAAKRDGWPAVVVPADNLPEASLVDGIDVRGVRTLGQLQSWLRGSTGLAGRITTADTTPESAADLADVVGQSQARFAVEVAAAGAHHLMLTGPPGVGKTMLAQRLPGLLPSLSGSESLEVTAIHSVAGLLSGDTPLITRPPFVAPHHSSSVAALVGGGSGMARPGAVSRAHRGVLFLDECAEISLSALEALRTPLEDGEIRLARRDGVACYPARFQLVLAANPCPCAPADPQDCICAAATKRRYLGKLSGPLLDRVDLRVQMHRLRAGAFSAADGESTSQVRQRVALAREAAAQRWRPHGFRTNAEVSGPLLRRKFRPSSAAMLPLRTALDRGLLSIRGVDRTLRVAWSLADLAGRTSPGIDEVAAALSFRQTGARR.

Belongs to the Mg-chelatase subunits D/I family. ComM subfamily.

This is an uncharacterized protein from Mycobacterium bovis (strain ATCC BAA-935 / AF2122/97).